A 394-amino-acid polypeptide reads, in one-letter code: NAD(P)H-quinone oxidoreductase subunit H (394 aa).

This sequence belongs to the complex I 49 kDa subunit family. In terms of assembly, NDH-1 can be composed of about 15 different subunits; different subcomplexes with different compositions have been identified which probably have different functions.

The protein localises to the cellular thylakoid membrane. The catalysed reaction is a plastoquinone + NADH + (n+1) H(+)(in) = a plastoquinol + NAD(+) + n H(+)(out). The enzyme catalyses a plastoquinone + NADPH + (n+1) H(+)(in) = a plastoquinol + NADP(+) + n H(+)(out). Its function is as follows. NDH-1 shuttles electrons from an unknown electron donor, via FMN and iron-sulfur (Fe-S) centers, to quinones in the respiratory and/or the photosynthetic chain. The immediate electron acceptor for the enzyme in this species is believed to be plastoquinone. Couples the redox reaction to proton translocation, and thus conserves the redox energy in a proton gradient. Cyanobacterial NDH-1 also plays a role in inorganic carbon-concentration. The polypeptide is NAD(P)H-quinone oxidoreductase subunit H (Synechococcus sp. (strain CC9311)).